Consider the following 299-residue polypeptide: GTPase Era (299 aa).

An Era-type G domain is found at 4–171 (KSGFVAILGR…VDILSENLDE (168 aa)). Residues 12–19 (GRPNVGKS) are G1. 12 to 19 (GRPNVGKS) is a GTP binding site. The interval 38 to 42 (QTTRN) is G2. The tract at residues 59-62 (DTPG) is G3. GTP is bound by residues 59 to 63 (DTPGI) and 121 to 124 (NKID). The tract at residues 121-124 (NKID) is G4. A G5 region spans residues 150–152 (ISA). In terms of domain architecture, KH type-2 spans 202–280 (TREEIPHSVA…FLETWVKVKK (79 aa)).

The protein belongs to the TRAFAC class TrmE-Era-EngA-EngB-Septin-like GTPase superfamily. Era GTPase family. In terms of assembly, monomer.

It is found in the cytoplasm. It localises to the cell membrane. Functionally, an essential GTPase that binds both GDP and GTP, with rapid nucleotide exchange. Plays a role in 16S rRNA processing and 30S ribosomal subunit biogenesis and possibly also in cell cycle regulation and energy metabolism. The polypeptide is GTPase Era (Streptococcus pneumoniae (strain P1031)).